We begin with the raw amino-acid sequence, 199 residues long: V-type ATP synthase subunit E (199 aa).

Belongs to the V-ATPase E subunit family.

Its function is as follows. Produces ATP from ADP in the presence of a proton gradient across the membrane. In Borreliella afzelii (strain PKo) (Borrelia afzelii), this protein is V-type ATP synthase subunit E.